The chain runs to 357 residues: UDP-N-acetylglucosamine--N-acetylmuramyl-(pentapeptide) pyrophosphoryl-undecaprenol N-acetylglucosamine transferase (357 aa).

Residues 13 to 15 (TGG), Asn125, Arg161, Ser189, Ile243, and Gln288 each bind UDP-N-acetyl-alpha-D-glucosamine.

It belongs to the glycosyltransferase 28 family. MurG subfamily.

The protein localises to the cell inner membrane. It carries out the reaction di-trans,octa-cis-undecaprenyl diphospho-N-acetyl-alpha-D-muramoyl-L-alanyl-D-glutamyl-meso-2,6-diaminopimeloyl-D-alanyl-D-alanine + UDP-N-acetyl-alpha-D-glucosamine = di-trans,octa-cis-undecaprenyl diphospho-[N-acetyl-alpha-D-glucosaminyl-(1-&gt;4)]-N-acetyl-alpha-D-muramoyl-L-alanyl-D-glutamyl-meso-2,6-diaminopimeloyl-D-alanyl-D-alanine + UDP + H(+). The protein operates within cell wall biogenesis; peptidoglycan biosynthesis. Functionally, cell wall formation. Catalyzes the transfer of a GlcNAc subunit on undecaprenyl-pyrophosphoryl-MurNAc-pentapeptide (lipid intermediate I) to form undecaprenyl-pyrophosphoryl-MurNAc-(pentapeptide)GlcNAc (lipid intermediate II). The protein is UDP-N-acetylglucosamine--N-acetylmuramyl-(pentapeptide) pyrophosphoryl-undecaprenol N-acetylglucosamine transferase of Bordetella pertussis (strain Tohama I / ATCC BAA-589 / NCTC 13251).